Consider the following 20-residue polypeptide: Antifungal protein 2 large subunit (20 aa).

A disordered region spans residues 1 to 20 (PEDPQRRYQEXQREXRXQQE).

Heterodimer of a large and a small subunit.

Functionally, possesses antifungal activity against P.infestans but not F.graminearum. The polypeptide is Antifungal protein 2 large subunit (Malva parviflora (Little mallow)).